Here is a 723-residue protein sequence, read N- to C-terminus: BBSome complex assembly protein BBS10 (723 aa).

This sequence belongs to the TCP-1 chaperonin family. As to quaternary structure, component of a complex composed at least of MKKS, BBS10, BBS12, TCP1, CCT2, CCT3, CCT4, CCT5 and CCT8.

It localises to the cell projection. Its subcellular location is the cilium. Probable molecular chaperone that assists the folding of proteins upon ATP hydrolysis. Plays a role in the assembly of BBSome, a complex involved in ciliogenesis regulating transports vesicles to the cilia. Involved in adipogenic differentiation. This Pongo abelii (Sumatran orangutan) protein is BBSome complex assembly protein BBS10 (BBS10).